The following is a 441-amino-acid chain: Glutamyl-tRNA reductase (441 aa).

Residues threonine 49–arginine 52, serine 109, glutamate 114–glutamine 116, and glutamine 120 each bind substrate. Residue cysteine 50 is the Nucleophile of the active site. Glycine 190–serine 195 is a binding site for NADP(+).

It belongs to the glutamyl-tRNA reductase family. In terms of assembly, homodimer.

It carries out the reaction (S)-4-amino-5-oxopentanoate + tRNA(Glu) + NADP(+) = L-glutamyl-tRNA(Glu) + NADPH + H(+). It functions in the pathway porphyrin-containing compound metabolism; protoporphyrin-IX biosynthesis; 5-aminolevulinate from L-glutamyl-tRNA(Glu): step 1/2. Catalyzes the NADPH-dependent reduction of glutamyl-tRNA(Glu) to glutamate 1-semialdehyde (GSA). The protein is Glutamyl-tRNA reductase of Moorella thermoacetica (strain ATCC 39073 / JCM 9320).